The following is a 77-amino-acid chain: Acyl carrier protein (77 aa).

The Carrier domain occupies Ala2–Ala77. Ser37 bears the O-(pantetheine 4'-phosphoryl)serine mark.

This sequence belongs to the acyl carrier protein (ACP) family. In terms of processing, 4'-phosphopantetheine is transferred from CoA to a specific serine of apo-ACP by AcpS. This modification is essential for activity because fatty acids are bound in thioester linkage to the sulfhydryl of the prosthetic group.

Its subcellular location is the cytoplasm. It functions in the pathway lipid metabolism; fatty acid biosynthesis. Its function is as follows. Carrier of the growing fatty acid chain in fatty acid biosynthesis. This is Acyl carrier protein from Oceanobacillus iheyensis (strain DSM 14371 / CIP 107618 / JCM 11309 / KCTC 3954 / HTE831).